The following is a 1025-amino-acid chain: Multidrug resistance protein MdtC (1025 aa).

12 consecutive transmembrane segments (helical) span residues phenylalanine 3 to leucine 23, glutamate 333 to leucine 353, isoleucine 360 to cysteine 380, leucine 387 to leucine 407, valine 431 to leucine 451, phenylalanine 463 to proline 483, leucine 528 to proline 548, valine 853 to serine 873, valine 875 to leucine 895, leucine 897 to valine 917, proline 953 to glycine 973, and isoleucine 984 to valine 1004.

It belongs to the resistance-nodulation-cell division (RND) (TC 2.A.6) family. MdtC subfamily. Part of a tripartite efflux system composed of MdtA, MdtB and MdtC. MdtC forms a heteromultimer with MdtB.

The protein resides in the cell inner membrane. Functionally, the MdtABC tripartite complex confers resistance against novobiocin and deoxycholate. The chain is Multidrug resistance protein MdtC from Escherichia coli (strain 55989 / EAEC).